A 147-amino-acid chain; its full sequence is Hemoglobin subunit beta-1 (147 aa).

Position 2 is an N-acetylvaline (Val-2). In terms of domain architecture, Globin spans 3–147; that stretch reads HLTDAEKAAV…VATALAHKYH (145 aa). Lys-18 bears the N6-succinyllysine mark. Residues Ser-21, Ser-45, and Ser-51 each carry the phosphoserine modification. Lys-60 carries the N6-succinyllysine modification. Residues His-64 and His-93 each contribute to the heme b site. Position 105 is an asymmetric dimethylarginine (Arg-105). Thr-124 carries the phosphothreonine modification.

It belongs to the globin family. As to quaternary structure, heterotetramer of two alpha chains and two beta chains. As to expression, red blood cells.

Functionally, involved in oxygen transport from the lung to the various peripheral tissues. The protein is Hemoglobin subunit beta-1 (Hbb-b1) of Mus musculus (Mouse).